A 309-amino-acid polypeptide reads, in one-letter code: Ornithine carbamoyltransferase (309 aa).

Carbamoyl phosphate-binding positions include serine 52–threonine 55, glutamine 79, arginine 103, and histidine 130–glutamine 133. Residues asparagine 161, aspartate 221, and serine 225–methionine 226 each bind L-ornithine. Residues cysteine 261–leucine 262 and arginine 289 each bind carbamoyl phosphate.

It belongs to the aspartate/ornithine carbamoyltransferase superfamily. OTCase family.

The protein localises to the cytoplasm. It catalyses the reaction carbamoyl phosphate + L-ornithine = L-citrulline + phosphate + H(+). It participates in amino-acid biosynthesis; L-arginine biosynthesis; L-arginine from L-ornithine and carbamoyl phosphate: step 1/3. Reversibly catalyzes the transfer of the carbamoyl group from carbamoyl phosphate (CP) to the N(epsilon) atom of ornithine (ORN) to produce L-citrulline. In Methanoculleus marisnigri (strain ATCC 35101 / DSM 1498 / JR1), this protein is Ornithine carbamoyltransferase.